Consider the following 311-residue polypeptide: Olfactory receptor 2Y1 (311 aa).

At 1–25 (MGSFNTSFEDGFILVGFSDWPQLEP) the chain is on the extracellular side. Residue Asn5 is glycosylated (N-linked (GlcNAc...) asparagine). Residues 26 to 49 (ILFVFIFIFYSLTLFGNTIIIALS) form a helical membrane-spanning segment. Residues 50–57 (WLDLRLHT) lie on the Cytoplasmic side of the membrane. A helical membrane pass occupies residues 58–79 (PMYFFLSHLSLLDLCFTTSTVP). The Extracellular portion of the chain corresponds to 80-100 (QLLINLCGVDRTITRGGCVAQ). Cysteines 97 and 188 form a disulfide. Residues 101–120 (LFIYLALGSTECVLLVVMAF) form a helical membrane-spanning segment. Topologically, residues 121 to 139 (DRYAAVCRPLHYMAIMHPH) are cytoplasmic. The chain crosses the membrane as a helical span at residues 140–158 (LCQTLAIASWGAGFVNSLI). At 159–194 (QTGLAMAMPLCGHRLNHFFCEMPVFLKLACADTEGT) the chain is on the extracellular side. The helical transmembrane segment at 195–218 (EAKMFVARVIVVAVPAALILGSYV) threads the bilayer. Over 219–235 (HIAHAVLRVKSTAGRRK) the chain is Cytoplasmic. Residues 236 to 258 (AFGTCGSHLLVVFLFYGSAIYTY) traverse the membrane as a helical segment. Topologically, residues 259 to 271 (LQSIHNYSEREGK) are extracellular. Asn264 carries an N-linked (GlcNAc...) asparagine glycan. Residues 272 to 291 (FVALFYTIITPILNPLIYTL) traverse the membrane as a helical segment. At 292-311 (RNKDVKGALWKVLWRGRDSG) the chain is on the cytoplasmic side.

Belongs to the G-protein coupled receptor 1 family.

Its subcellular location is the cell membrane. Functionally, odorant receptor. This chain is Olfactory receptor 2Y1 (OR2Y1), found in Homo sapiens (Human).